The following is a 298-amino-acid chain: 5,10-methylenetetrahydrofolate reductase (298 aa).

E28 serves as the catalytic Proton donor/acceptor. An NADH-binding site is contributed by T59. Residues Y60, A62, H88, R118, G119, D120, A132, Y152, H156, A159, D165, N168, and K172 each coordinate FAD. D120 is a binding site for (6S)-5-methyl-5,6,7,8-tetrahydrofolate. Q183 provides a ligand contact to NADH. (6S)-5-methyl-5,6,7,8-tetrahydrofolate contacts are provided by Q183, Q219, and R279.

It belongs to the methylenetetrahydrofolate reductase family. The cofactor is FAD.

The enzyme catalyses (6S)-5-methyl-5,6,7,8-tetrahydrofolate + NAD(+) = (6R)-5,10-methylene-5,6,7,8-tetrahydrofolate + NADH + H(+). It participates in one-carbon metabolism; tetrahydrofolate interconversion. It functions in the pathway amino-acid biosynthesis; L-methionine biosynthesis via de novo pathway. In terms of biological role, catalyzes the NADH-dependent reduction of 5,10-methylenetetrahydrofolate to 5-methyltetrahydrofolate. Is required to provide the methyl group necessary for methionine synthetase to convert homocysteine to methionine; the methyl group is given by 5-methyltetrahydrofolate. This chain is 5,10-methylenetetrahydrofolate reductase (metF), found in Pectobacterium carotovorum subsp. carotovorum (Erwinia carotovora subsp. carotovora).